We begin with the raw amino-acid sequence, 85 residues long: Small ribosomal subunit protein bS16 (85 aa).

Belongs to the bacterial ribosomal protein bS16 family.

This is Small ribosomal subunit protein bS16 from Nitrosomonas eutropha (strain DSM 101675 / C91 / Nm57).